The sequence spans 750 residues: MFRSTATVAAATAMGLLTATGHGSLAIAQGTTGSNAVVVDGTNFALNGASMSYVFHANSTTGDLVSDHFGATISGAIPAPKEPAVNGWVGMPGRIRREFPDQGRGDFRIPAVRIRQTAGYTVSDLQYQGHEVVDGKPALPGLPATFGEAGDVTTLVVHLYDNYSAVAADLSYSVFPEFDAVVRSVNVTNKGKGNITIENLASLSVDFPLEDLDLVSLRGDWAREANRERRRVEYGIQGFGSSTGYSSHLHNPFFALVHPSTTESQGEAWGFNLVYTGSFSAQVEKGSQGLTRALIGFNPDQLSWNLGPGETLTSPECVSVYSKDGIGGMSRKFHRLYRKHLIRSKFATSDRPPLLNSWEGVYFDFNQSSIETLAEQSAALGIRLFVMDDGWFGDKYPRTSDNAGLGDWTPNPDRFPNGLEPVVEEITNLTVNDTSAEKLRFGIWVEPEMVNPNSSLYREHPDWALHAGAYARTERRNQLVLNLALPEVQEYIIDFMTDLLNSADISYIKWDNNRGIHEAPSPSTDHEYMLGVYRVFDTLTARFPDVLWEGCASGGGRFDAGVLHYFPQIWTSDNTDGVDRVTIQFGTSLAYPPSAMGAHLSAVPNHQTGRTVPLEFRAHVAMMGGSFGLELDPATLQDDPDVPELIQMAEKVNPLVLNGDLYRLRLPEESQWPAALFVAEDGSQAVLFYFQLSPNVNHAAPWVRLQGLDPEASYTVDGDKTYTGATLMNLGLQYTFDTEYGSKVVFLERQ.

Residues 1–26 (MFRSTATVAAATAMGLLTATGHGSLA) form the signal peptide. N-linked (GlcNAc...) asparagine glycans are attached at residues N58, N162, N186, N194, N366, N428, N432, and N453. D511 (nucleophile) is an active-site residue. D573 (proton donor) is an active-site residue.

It belongs to the glycosyl hydrolase 36 family. In terms of assembly, homotetramer. Mg(2+) serves as cofactor. It depends on NAD(+) as a cofactor.

The protein localises to the secreted. It carries out the reaction Hydrolysis of terminal, non-reducing alpha-D-galactose residues in alpha-D-galactosides, including galactose oligosaccharides, galactomannans and galactolipids.. Functionally, hydrolyzes a variety of simple alpha-D-galactoside as well as more complex molecules such as oligosaccharides and polysaccharides. Active on paranitrophenyl-alpha-galactoside, raffinose, locust bean gum and gum guar. This is Alpha-galactosidase C (aglC) from Emericella nidulans (strain FGSC A4 / ATCC 38163 / CBS 112.46 / NRRL 194 / M139) (Aspergillus nidulans).